A 273-amino-acid polypeptide reads, in one-letter code: Ribosomal RNA small subunit methyltransferase A (273 aa).

Asn18, Leu20, Gly45, Glu66, Asp91, and Asn113 together coordinate S-adenosyl-L-methionine.

The protein belongs to the class I-like SAM-binding methyltransferase superfamily. rRNA adenine N(6)-methyltransferase family. RsmA subfamily.

Its subcellular location is the cytoplasm. It catalyses the reaction adenosine(1518)/adenosine(1519) in 16S rRNA + 4 S-adenosyl-L-methionine = N(6)-dimethyladenosine(1518)/N(6)-dimethyladenosine(1519) in 16S rRNA + 4 S-adenosyl-L-homocysteine + 4 H(+). Functionally, specifically dimethylates two adjacent adenosines (A1518 and A1519) in the loop of a conserved hairpin near the 3'-end of 16S rRNA in the 30S particle. May play a critical role in biogenesis of 30S subunits. In Escherichia coli O157:H7, this protein is Ribosomal RNA small subunit methyltransferase A.